Reading from the N-terminus, the 124-residue chain is Probable 5-hydroxyisourate hydrolase (124 aa).

Positions 16, 57, and 121 each coordinate substrate.

It belongs to the transthyretin family. 5-hydroxyisourate hydrolase subfamily. Homotetramer.

It carries out the reaction 5-hydroxyisourate + H2O = 5-hydroxy-2-oxo-4-ureido-2,5-dihydro-1H-imidazole-5-carboxylate + H(+). In terms of biological role, catalyzes the hydrolysis of 5-hydroxyisourate (HIU) to 2-oxo-4-hydroxy-4-carboxy-5-ureidoimidazoline (OHCU). In Schizosaccharomyces pombe (strain 972 / ATCC 24843) (Fission yeast), this protein is Probable 5-hydroxyisourate hydrolase.